The sequence spans 137 residues: Phosphoribosyl-AMP cyclohydrolase (137 aa).

Residue Asp84 participates in Mg(2+) binding. Cys85 is a binding site for Zn(2+). Mg(2+) contacts are provided by Asp86 and Asp88. Zn(2+)-binding residues include Cys101 and Cys108.

The protein belongs to the PRA-CH family. In terms of assembly, homodimer. It depends on Mg(2+) as a cofactor. The cofactor is Zn(2+).

Its subcellular location is the cytoplasm. It catalyses the reaction 1-(5-phospho-beta-D-ribosyl)-5'-AMP + H2O = 1-(5-phospho-beta-D-ribosyl)-5-[(5-phospho-beta-D-ribosylamino)methylideneamino]imidazole-4-carboxamide. It participates in amino-acid biosynthesis; L-histidine biosynthesis; L-histidine from 5-phospho-alpha-D-ribose 1-diphosphate: step 3/9. Functionally, catalyzes the hydrolysis of the adenine ring of phosphoribosyl-AMP. In Chlorobium phaeovibrioides (strain DSM 265 / 1930) (Prosthecochloris vibrioformis (strain DSM 265)), this protein is Phosphoribosyl-AMP cyclohydrolase.